The following is a 31-amino-acid chain: Phalloidin proprotein (31 aa).

Positions 1–10 are excised as a propeptide; sequence MSDINATRLP. Positions 11 to 17 form a cross-link, cyclopeptide (Ala-Pro); it reads AWLATCP. Residues 12–16 constitute a cross-link (2'-cysteinyl-6'-hydroxytryptophan sulfoxide (Trp-Cys)); the sequence is WLATC. Positions 18–31 are excised as a propeptide; the sequence is CAGDDVNPLLTRGE.

The protein belongs to the MSDIN fungal toxin family. Processed by the macrocyclase-peptidase enzyme POPB to yield a toxic cyclic heptapeptide. POPB first removes 10 residues from the N-terminus. Conformational trapping of the remaining peptide forces the enzyme to release this intermediate rather than proceed to macrocyclization. The enzyme rebinds the remaining peptide in a different conformation and catalyzes macrocyclization of the N-terminal 7 residues.

Its function is as follows. Major toxin that belongs to the bicyclic heptapeptides called phallotoxins. Although structurally related to amatoxins, phallotoxins have a different mode of action, which is the stabilization of F-actin. Phallotoxins are poisonous when administered parenterally, but not orally because of poor absorption. This chain is Phalloidin proprotein, found in Amanita ocreata (Western North American destroying angel).